The sequence spans 454 residues: MQAELVIKNGLVILETGEVITDVAVQGGKIVAIGQDLSGERVIDATGLVVSPGMVDAHVHITDPGGGYRDEWEGYVTGTAACAKGGVTTFMEMPLNQIPATVDKTSLEIKYKAGENKLKVDVGSFGGVVPTNLADGIQELDEGGVSGYKCFLGTCGDRSIEGDFQNVDDYSLYEGMKQVAKTGKVLAIHAENAPITDKLGAVAYQNGETTLAAYVATRPVFTEVEAIQKAILFAKETGCRIHICHVACQEGVEEVLKAQAEGVDVTCETCTHYLYFTTDELDAIGPVVKCSPPIRDADQQAALWNHVQTGGIAFVTSDHSPCTPDLKDTTNAFEAWGGISGVQNNVDVLFDEAVQKRGLSLKQFADMIAANPADRYHLAQKGRISIGKDADFVLIKPNAPYILKAEDLEYRNKISPYIGREIGAQVIQTILRGETIYAQETGVTEAFNGVFIKN.

Zn(2+)-binding residues include His58, His60, Lys149, His189, His245, and Asp318. The residue at position 149 (Lys149) is an N6-carboxylysine.

This sequence belongs to the metallo-dependent hydrolases superfamily. Allantoinase family. As to quaternary structure, homotetramer. The cofactor is Zn(2+). Carboxylation allows a single lysine to coordinate two zinc ions.

It carries out the reaction (S)-allantoin + H2O = allantoate + H(+). The protein operates within nitrogen metabolism; (S)-allantoin degradation; allantoate from (S)-allantoin: step 1/1. Functionally, catalyzes the conversion of allantoin (5-ureidohydantoin) to allantoic acid by hydrolytic cleavage of the five-member hydantoin ring. In Enterococcus faecalis (strain ATCC 700802 / V583), this protein is Allantoinase.